The following is a 118-amino-acid chain: Succinate dehydrogenase assembly factor 1, mitochondrial (118 aa).

The short motif at 14-16 (LYR) is the LYR motif 1; required for interaction with HSC20 element. An LYR motif 2; not required for interaction with HSC20 motif is present at residues 53–55 (LYR). The tract at residues 53–65 (LYRRGRRQLQLLR) is interaction with SDHB. Residues 68-118 (HATAMGTFVRPRGPAEEPGDATAPGTRLDDGGAPKNSCEDTGARETRSDGR) are disordered. A compositionally biased stretch (basic and acidic residues) spans 94-118 (RLDDGGAPKNSCEDTGARETRSDGR).

This sequence belongs to the complex I LYR family. SDHAF1 subfamily. In terms of assembly, interacts with SDHB within an SDHA-SDHB subcomplex. Also interacts with the iron-sulfur transfer complex formed by HSC20, HSPA9 and ISCU through direct binding to HSC20. Binding of SDHAF1 to SDHB precedes and is necessary for recruitment of the iron-sulfur transfer complex by SDHAF1.

It is found in the mitochondrion matrix. In terms of biological role, plays an essential role in the assembly of succinate dehydrogenase (SDH), an enzyme complex (also referred to as respiratory complex II) that is a component of both the tricarboxylic acid (TCA) cycle and the mitochondrial electron transport chain, and which couples the oxidation of succinate to fumarate with the reduction of ubiquinone (coenzyme Q) to ubiquinol. Promotes maturation of the iron-sulfur protein subunit Sdhb of the SDH catalytic dimer, protecting it from the deleterious effects of oxidants. May act together with SDHAF3. Contributes to iron-sulfur cluster incorporation into SDHB by binding to SDHB and recruiting the iron-sulfur transfer complex formed by HSC20, HSPA9 and ISCU through direct binding to HSC20. The chain is Succinate dehydrogenase assembly factor 1, mitochondrial from Mus musculus (Mouse).